The chain runs to 463 residues: Glutamate--tRNA ligase (463 aa).

The 'HIGH' region motif lies at 10–20 (PSPTGYLHIGG). The 'KMSKS' region signature appears at 252-256 (KLSKR). Lysine 255 lines the ATP pocket.

It belongs to the class-I aminoacyl-tRNA synthetase family. Glutamate--tRNA ligase type 1 subfamily. Monomer.

The protein resides in the cytoplasm. The enzyme catalyses tRNA(Glu) + L-glutamate + ATP = L-glutamyl-tRNA(Glu) + AMP + diphosphate. In terms of biological role, catalyzes the attachment of glutamate to tRNA(Glu) in a two-step reaction: glutamate is first activated by ATP to form Glu-AMP and then transferred to the acceptor end of tRNA(Glu). The chain is Glutamate--tRNA ligase from Mycoplasmopsis agalactiae (strain NCTC 10123 / CIP 59.7 / PG2) (Mycoplasma agalactiae).